Consider the following 705-residue polypeptide: Variediene synthase (705 aa).

The segment at 9-331 (LNSTLSSVVE…RCPRYHPWLC (323 aa)) is terpene cyclase. Residue Asp100 participates in Mg(2+) binding. Residues Asp100, 186-189 (RIID), Asn230, 234-238 (SFDIE), and 325-326 (RY) each bind substrate. The DDXXD 1 signature appears at 100 to 104 (DNVVE). Positions 230-238 (NDYFSFDIE) match the NSE/DTE motif. A prenyltransferase region spans residues 332–705 (KEAASLLHQD…VRLLIHRLKV (374 aa)). Over residues 349–366 (GRKPQALEEYRSRSHSES) the composition is skewed to basic and acidic residues. The disordered stretch occupies residues 349-374 (GRKPQALEEYRSRSHSESDLSDASPT). Isopentenyl diphosphate-binding residues include Lys424, Arg427, and His456. 2 residues coordinate Mg(2+): Asp463 and Asp467. Residues 463–467 (DDIED) carry the DDXXD 2 motif. Arg472 contributes to the dimethylallyl diphosphate binding site. Arg473 lines the isopentenyl diphosphate pocket. Dimethylallyl diphosphate-binding residues include Lys550, Thr551, Gln589, Asn596, Lys605, and Lys615.

In the N-terminal section; belongs to the terpene synthase family. The protein in the C-terminal section; belongs to the FPP/GGPP synthase family. As to quaternary structure, hexamer. Mg(2+) is required as a cofactor.

The catalysed reaction is isopentenyl diphosphate + (2E,6E)-farnesyl diphosphate = (2E,6E,10E)-geranylgeranyl diphosphate + diphosphate. It catalyses the reaction isopentenyl diphosphate + (2E,6E,10E)-geranylgeranyl diphosphate = (2E,6E,10E,14E)-geranylfarnesyl diphosphate + diphosphate. It carries out the reaction (2E,6E,10E)-geranylgeranyl diphosphate = variediene + diphosphate. The enzyme catalyses (2E,6E,10E,14E)-geranylfarnesyl diphosphate = (R,2E)-alpha-cericerene + diphosphate. The protein operates within secondary metabolite biosynthesis; terpenoid biosynthesis. Bifunctional terpene synthase that converts dimethylallyl diphosphate (DMAPP) and isopentenyl diphosphate (IPP) into variediene as a single product. The C-terminal prenyltransferase (PT) domain of EvVS catalyzes formation of geranylgeranyl pyrophosphate (GGPP), whereas the N-terminal terpene cyclase (TC) domain catalyzes the cyclization of GGPP to variediene. The PT domain can also synthesize geranylfarnesyl pyrophosphate (GFPP) from the C5 isoprene units in vitro, while the TC domain is able to cyclize GFPP to the sesterterpene (2E)-alpha-cericerene. The protein is Variediene synthase of Emericella variicolor (Aspergillus stellatus).